A 425-amino-acid chain; its full sequence is O-methyltransferase AMT9 (425 aa).

S-adenosyl-L-methionine is bound by residues 257 to 258, Asp280, 306 to 307, Arg322, and Arg323; these read GG and DF. The Proton acceptor role is filled by His326.

This sequence belongs to the class I-like SAM-binding methyltransferase superfamily. Cation-independent O-methyltransferase family.

The protein operates within mycotoxin biosynthesis. O-methyltransferase; part of the gene clusters that mediate the biosynthesis of AM-toxins, host-selective toxins (HSTs) causing Alternaria blotch on apple, a worldwide distributed disease. AM-toxins are cyclic depsipeptides containing the 3 residues 2-hydroxy-isovaleric acid (2-HIV), dehydroalanine, L-alanine which are common for all 3 AM-toxins I to III. The fourth precursor is L-alpha-amino-methoxyphenyl-valeric acid (L-Amv) for AM-toxin I, L-alpha-amino-phenyl-valeric acid (L-Apv) for AM-toxin II, and L-alpha-amino-hydroxyphenyl-valeric acid (L-Ahv) for AM-toxin III. AM-toxins have two target sites for affecting susceptible apple cells; they cause invagination of the plasma membrane and electrolyte loss and chloroplast disorganization. The non-ribosomal peptide synthetase AMT1 contains 4 catalytic modules and is responsible for activation of each residue in AM-toxin. The aldo-keto reductase AMT2 catalyzes the conversion of 2-keto-isovaleric acid (2-KIV) to 2-hydroxy-isovaleric acid (2-HIV), one of the precursor residues incorporated by AMT1 during AM-toxin biosynthesis, by reduction of its ketone to an alcohol. The cytochrome P450 monooxygenase AMT3 and the thioesterase AMT4 are also important for AM-toxin production, but their exact function within the AM-toxin biosynthesis are not known yet. Up to 21 proteins (including AMT1 to AMT4) are predicted to be involved in AM-toxin biosynthesis since their expression ishighly up-regulated in AM-toxin-producing cultures. The protein is O-methyltransferase AMT9 of Alternaria alternata (Alternaria rot fungus).